The primary structure comprises 210 residues: Protein DrgA (210 aa).

Belongs to the nitroreductase family. FMN is required as a cofactor.

Controls resistance to the herbicide Dinoseb and metronidazole. Involved in detoxification of Dinoseb via the reduction of the nitro group(s) and this process is accompanied by the formation of toxic superoxide anions. In Synechocystis sp. (strain ATCC 27184 / PCC 6803 / Kazusa), this protein is Protein DrgA (drgA).